Here is an 87-residue protein sequence, read N- to C-terminus: UPF0213 protein SSA_0709 (87 aa).

Residues 3–78 (NKAYMYVLEC…KKKTRQAKLA (76 aa)) form the GIY-YIG domain.

It belongs to the UPF0213 family.

The chain is UPF0213 protein SSA_0709 from Streptococcus sanguinis (strain SK36).